Here is a 132-residue protein sequence, read N- to C-terminus: Profilin (132 aa).

The protein belongs to the profilin family. Occurs in many kinds of cells as a complex with monomeric actin in a 1:1 ratio.

It is found in the cytoplasm. The protein resides in the cytoskeleton. In terms of biological role, binds to actin and affects the structure of the cytoskeleton. At high concentrations, profilin prevents the polymerization of actin, whereas it enhances it at low concentrations. By binding to PIP2, it inhibits the formation of IP3 and DG. This is Profilin from Naegleria pringsheimi (Amoeba).